The chain runs to 185 residues: Ribosome-recycling factor (185 aa).

Belongs to the RRF family.

Its subcellular location is the cytoplasm. Its function is as follows. Responsible for the release of ribosomes from messenger RNA at the termination of protein biosynthesis. May increase the efficiency of translation by recycling ribosomes from one round of translation to another. The polypeptide is Ribosome-recycling factor (Geobacter metallireducens (strain ATCC 53774 / DSM 7210 / GS-15)).